A 587-amino-acid polypeptide reads, in one-letter code: Arginine--tRNA ligase (587 aa).

Positions 127 to 137 (PNLAKEMHVGH) match the 'HIGH' region motif.

Belongs to the class-I aminoacyl-tRNA synthetase family. In terms of assembly, monomer.

It is found in the cytoplasm. It catalyses the reaction tRNA(Arg) + L-arginine + ATP = L-arginyl-tRNA(Arg) + AMP + diphosphate. The protein is Arginine--tRNA ligase of Pseudomonas aeruginosa (strain UCBPP-PA14).